A 485-amino-acid chain; its full sequence is Glutamyl-tRNA(Gln) amidotransferase subunit A (485 aa).

Residues lysine 78 and serine 153 each act as charge relay system in the active site. The active-site Acyl-ester intermediate is the serine 177.

This sequence belongs to the amidase family. GatA subfamily. In terms of assembly, heterotrimer of A, B and C subunits.

It catalyses the reaction L-glutamyl-tRNA(Gln) + L-glutamine + ATP + H2O = L-glutaminyl-tRNA(Gln) + L-glutamate + ADP + phosphate + H(+). In terms of biological role, allows the formation of correctly charged Gln-tRNA(Gln) through the transamidation of misacylated Glu-tRNA(Gln) in organisms which lack glutaminyl-tRNA synthetase. The reaction takes place in the presence of glutamine and ATP through an activated gamma-phospho-Glu-tRNA(Gln). This is Glutamyl-tRNA(Gln) amidotransferase subunit A from Bacillus cereus (strain 03BB102).